Consider the following 316-residue polypeptide: Acetyl-coenzyme A carboxylase carboxyl transferase subunit alpha (316 aa).

The region spanning R39 to M293 is the CoA carboxyltransferase C-terminal domain.

The protein belongs to the AccA family. Acetyl-CoA carboxylase is a heterohexamer composed of biotin carboxyl carrier protein (AccB), biotin carboxylase (AccC) and two subunits each of ACCase subunit alpha (AccA) and ACCase subunit beta (AccD).

Its subcellular location is the cytoplasm. The catalysed reaction is N(6)-carboxybiotinyl-L-lysyl-[protein] + acetyl-CoA = N(6)-biotinyl-L-lysyl-[protein] + malonyl-CoA. It participates in lipid metabolism; malonyl-CoA biosynthesis; malonyl-CoA from acetyl-CoA: step 1/1. Functionally, component of the acetyl coenzyme A carboxylase (ACC) complex. First, biotin carboxylase catalyzes the carboxylation of biotin on its carrier protein (BCCP) and then the CO(2) group is transferred by the carboxyltransferase to acetyl-CoA to form malonyl-CoA. This Pseudomonas aeruginosa (strain UCBPP-PA14) protein is Acetyl-coenzyme A carboxylase carboxyl transferase subunit alpha.